The primary structure comprises 207 residues: 8-oxoguanine DNA glycosylase/AP lyase (207 aa).

Catalysis depends on residues K129 and D147.

It belongs to the type-2 OGG1 family.

It carries out the reaction 2'-deoxyribonucleotide-(2'-deoxyribose 5'-phosphate)-2'-deoxyribonucleotide-DNA = a 3'-end 2'-deoxyribonucleotide-(2,3-dehydro-2,3-deoxyribose 5'-phosphate)-DNA + a 5'-end 5'-phospho-2'-deoxyribonucleoside-DNA + H(+). Catalyzes the excision of an oxidatively damaged form of guanine (7,8-dihydro-8-oxoguanine = 8-oxoG) from DNA. Also cleaves the DNA backbone at apurinic/apyrimidinic sites (AP sites). This is 8-oxoguanine DNA glycosylase/AP lyase from Thermotoga maritima (strain ATCC 43589 / DSM 3109 / JCM 10099 / NBRC 100826 / MSB8).